The following is a 531-amino-acid chain: Acetate CoA-transferase YdiF (531 aa).

Glu333 acts as the 5-glutamyl coenzyme A thioester intermediate in catalysis.

It belongs to the 3-oxoacid CoA-transferase family. Homotetramer; dimer of dimers.

It catalyses the reaction an acyl-CoA + acetate = a carboxylate + acetyl-CoA. Its function is as follows. CoA transferase having broad substrate specificity for short-chain acyl-CoA thioesters with the activity decreasing when the length of the carboxylic acid chain exceeds four carbons. Exhibits high activity with acetoacetyl-CoA, propionyl-CoA, crotonoyl-CoA or butyryl-CoA as donors, with acetate as an acceptor. When acetyl-CoA is used as the donor, propionate, acetoacetate, butyrate, isobutyrate, and 4-hydroxybutyrate can be utilized as acceptors but not isovalerate. May play a role in short-chain fatty acid metabolism in E.coli. In Escherichia coli O157:H7, this protein is Acetate CoA-transferase YdiF.